We begin with the raw amino-acid sequence, 241 residues long: Ribosomal RNA large subunit methyltransferase E (241 aa).

Residues glycine 88, tryptophan 90, aspartate 111, aspartate 127, and aspartate 151 each contribute to the S-adenosyl-L-methionine site. The active-site Proton acceptor is the lysine 191.

It belongs to the class I-like SAM-binding methyltransferase superfamily. RNA methyltransferase RlmE family.

Its subcellular location is the cytoplasm. The catalysed reaction is uridine(2552) in 23S rRNA + S-adenosyl-L-methionine = 2'-O-methyluridine(2552) in 23S rRNA + S-adenosyl-L-homocysteine + H(+). Functionally, specifically methylates the uridine in position 2552 of 23S rRNA at the 2'-O position of the ribose in the fully assembled 50S ribosomal subunit. The sequence is that of Ribosomal RNA large subunit methyltransferase E from Bartonella quintana (strain Toulouse) (Rochalimaea quintana).